Consider the following 208-residue polypeptide: Cysteine-rich protein 2 (208 aa).

The LIM zinc-binding 1 domain occupies 5-57; that stretch reads CPKCDKTVYFAEKVSSLGKDWHKFCLKCERCNKTLTPGGHAEHDGKPFCHKPC. Residue Lys23 is modified to N6-acetyllysine. Position 104 is a phosphoserine (Ser104). The 53-residue stretch at 126-178 folds into the LIM zinc-binding 2 domain; sequence CPRCNKRVYFAEKVTSLGKDWHRPCLRCERCSKTLTPGGHAEHDGQPYCHKPC. Lys138 and Lys144 each carry N6-acetyllysine.

As to quaternary structure, interacts with TGFB1I1.

This is Cysteine-rich protein 2 (Crip2) from Mus musculus (Mouse).